The primary structure comprises 728 residues: Procollagen-lysine,2-oxoglutarate 5-dioxygenase 1 (728 aa).

An N-terminal signal peptide occupies residues 1-18 (MRSLLLLAPLAWLLLVQA). 2 N-linked (GlcNAc...) asparagine glycosylation sites follow: Asn198 and Asn539. Residues 637-728 (QFDLAFVVRY…RYIAVSFVDP (92 aa)) enclose the Fe2OG dioxygenase domain. Fe cation is bound by residues His657 and Asp659. N-linked (GlcNAc...) asparagine glycosylation occurs at Asn687. A Fe cation-binding site is contributed by His709. Arg719 is an active-site residue.

As to quaternary structure, homodimer. Identified in a complex with P3H3 and P3H4. Fe(2+) serves as cofactor. Requires L-ascorbate as cofactor. Highly expressed in the liver, heart, lung, skeletal muscle and kidney.

Its subcellular location is the rough endoplasmic reticulum membrane. The catalysed reaction is L-lysyl-[collagen] + 2-oxoglutarate + O2 = (5R)-5-hydroxy-L-lysyl-[collagen] + succinate + CO2. Its function is as follows. Part of a complex composed of PLOD1, P3H3 and P3H4 that catalyzes hydroxylation of lysine residues in collagen alpha chains and is required for normal assembly and cross-linkling of collagen fibrils. Forms hydroxylysine residues in -Xaa-Lys-Gly- sequences in collagens. These hydroxylysines serve as sites of attachment for carbohydrate units and are essential for the stability of the intermolecular collagen cross-links. In Mus musculus (Mouse), this protein is Procollagen-lysine,2-oxoglutarate 5-dioxygenase 1 (Plod1).